We begin with the raw amino-acid sequence, 596 residues long: Signal peptide peptidase-like 2B (596 aa).

A signal peptide spans 1–21 (MAARWAQFLLFSLLSLPQVYC). At 22–170 (EYGMVHVLSE…APNEPVLDYN (149 aa)) the chain is on the lumenal side. A PA domain is found at 53 to 147 (HDLGKASLLQ…LLSYSDMLDI (95 aa)). An N-linked (GlcNAc...) asparagine glycan is attached at asparagine 93. A helical transmembrane segment spans residues 171-191 (MVIIFVMAVGTVAIGGYWAGS). Over 192–219 (RDVKERYMKHKRDDGAEKHEDETVDVTP) the chain is Cytoplasmic. A helical membrane pass occupies residues 220–240 (IMICVFVVMCCSMLVLLYFFY). The Lumenal portion of the chain corresponds to 241–242 (DH). A helical transmembrane segment spans residues 243-263 (LVYVIIGIFCLAASIGLYSCL). The Cytoplasmic segment spans residues 264–289 (SPFVRRFPLGKCRIPDNNLPYFHKRP). The chain crosses the membrane as a helical span at residues 290–310 (QVRILLLAVFCISVSVVWGVF). The Lumenal segment spans residues 311 to 315 (RNEDQ). A helical transmembrane segment spans residues 316 to 336 (WAWVLQDALGIAFCLYMLKTI). Residues 337-344 (RLPTFKGC) lie on the Cytoplasmic side of the membrane. The chain crosses the membrane as a helical span at residues 345–365 (TLLLLVLFVYDVFFVFITPFL). The active site involves aspartate 355. Topologically, residues 366-408 (TKTGESIMVEVAAGPSDSATHEKLPMVLKVPRLNSSPLALCDR) are lumenal. Residues 409-429 (PFSLLGFGDILVPGLLVAYCH) form a helical membrane-spanning segment. Aspartate 417 is a catalytic residue. Over 430–441 (RFDIQVQSSRVY) the chain is Cytoplasmic. Residues 442 to 462 (FVACTIAYGIGLLVTFVALAL) traverse the membrane as a helical segment. The Lumenal segment spans residues 463-466 (MQMG). The chain crosses the membrane as a helical span at residues 467-487 (QPALLYLVPCTLITSFSVALW). A PAL motif is present at residues 468 to 470 (PAL). At 488-596 (RKELAMFWTG…SLNLEQKQLE (109 aa)) the chain is on the cytoplasmic side. The interval 543 to 596 (KELHSPTLAAEEPADNDTKTEQSEVSIAQSEEAAGHNKDDLESKSLNLEQKQLE) is disordered. Over residues 575-585 (AAGHNKDDLES) the composition is skewed to basic and acidic residues. Over residues 586–596 (KSLNLEQKQLE) the composition is skewed to polar residues.

The protein belongs to the peptidase A22B family.

The protein resides in the cell membrane. It localises to the golgi apparatus membrane. The protein localises to the lysosome membrane. Its subcellular location is the endosome membrane. It is found in the membrane. Functionally, intramembrane-cleaving aspartic protease (I-CLiP) that cleaves type II membrane signal peptides in the hydrophobic plane of the membrane. This is Signal peptide peptidase-like 2B from Gallus gallus (Chicken).